The following is a 478-amino-acid chain: Protein nucleotidyltransferase YdiU (478 aa).

ATP-binding residues include glycine 84, glycine 86, arginine 87, lysine 107, aspartate 119, glycine 120, arginine 170, and arginine 177. Aspartate 246 (proton acceptor) is an active-site residue. Mg(2+) contacts are provided by asparagine 247 and aspartate 256. Aspartate 256 contributes to the ATP binding site.

It belongs to the SELO family. Mg(2+) serves as cofactor. Requires Mn(2+) as cofactor.

The enzyme catalyses L-seryl-[protein] + ATP = 3-O-(5'-adenylyl)-L-seryl-[protein] + diphosphate. It carries out the reaction L-threonyl-[protein] + ATP = 3-O-(5'-adenylyl)-L-threonyl-[protein] + diphosphate. It catalyses the reaction L-tyrosyl-[protein] + ATP = O-(5'-adenylyl)-L-tyrosyl-[protein] + diphosphate. The catalysed reaction is L-histidyl-[protein] + UTP = N(tele)-(5'-uridylyl)-L-histidyl-[protein] + diphosphate. The enzyme catalyses L-seryl-[protein] + UTP = O-(5'-uridylyl)-L-seryl-[protein] + diphosphate. It carries out the reaction L-tyrosyl-[protein] + UTP = O-(5'-uridylyl)-L-tyrosyl-[protein] + diphosphate. Functionally, nucleotidyltransferase involved in the post-translational modification of proteins. It can catalyze the addition of adenosine monophosphate (AMP) or uridine monophosphate (UMP) to a protein, resulting in modifications known as AMPylation and UMPylation. The polypeptide is Protein nucleotidyltransferase YdiU (Escherichia coli (strain K12 / MC4100 / BW2952)).